The following is a 90-amino-acid chain: UPF0237 protein MK1213 (90 aa).

The 75-residue stretch at 5-79 (VVTVIGADRP…EELGVDVIVQ (75 aa)) folds into the ACT domain.

Belongs to the UPF0237 family.

The sequence is that of UPF0237 protein MK1213 from Methanopyrus kandleri (strain AV19 / DSM 6324 / JCM 9639 / NBRC 100938).